The sequence spans 935 residues: ABC transporter A family member 7 (935 aa).

Transmembrane regions (helical) follow at residues 34–54, 338–358, 392–412, 424–444, 454–474, 483–503, and 528–548; these read LIMIPFYLCILLVIIQILFDT, IASLIGPLFFTWVILLLFPVI, FLTISVLYVICLMIFGSAIGL, FVFYFLYLNLQIALAFLVSSV, ASYIYVFGSGLLGLFLLNFLI, WIIVMELYPGFSLYRGLYELA, and DDVFYIIVVEWFLALIAAYYI. A disordered region spans residues 571-591; that stretch reads SLRRPSLQRQGSKVSVDMEKP. The region spanning 613–850 is the ABC transporter domain; it reads IVCDNLKKVY…YGGSYVFTMT (238 aa). 651-658 serves as a coordination point for ATP; the sequence is GPNGAGKT.

It belongs to the ABC transporter superfamily. ABCA family. CPR flippase (TC 3.A.1.211) subfamily.

It localises to the membrane. This Arabidopsis thaliana (Mouse-ear cress) protein is ABC transporter A family member 7 (ABCA7).